Here is a 505-residue protein sequence, read N- to C-terminus: MILFTAIILVASVVHVVVSSPQQCYYCVEDDCETMSLWINQTCATSQRSLGTSHCGTAAVRYHEGYLGGVPLETTVKGCFDCTDKSAACFALAGLLKSSLGWVVQQCDINCCNDTNCNTNVTILSQNATNVLRRDAFGTTSCYECEESDNYTCILKQQSQTCRTSRAALGITHCSSAKVKTRNVLTGTVDVSFIRGCISCEDKKSACALLAGSFKFRKHATMLECDIECCNGSYCNDGAASLSKCFHCMEDDGLSCSARQQRQICSLDPESLGTTHCGSAVGRKRNQNGAIQNYFYRGCFDCSKKKEACFTLGGYWKGDVNAPGATTLLECELQCCDPNVINGSYCNVETPILKPAAITVFTPTVTGPAQCNVCLEKDETSCSENQQTQVCGIDPYSLGTTHCGSAVGRYRQSNGDMVYGFYRGCINCADKMAACAAVGGFRKNVQKWTQLQCEIECCTEDNCNTHTPRLVEVEQPNSAPRGEIHQLFRCTFVAVFIVFACFIVC.

The N-terminal stretch at 1–19 (MILFTAIILVASVVHVVVS) is a signal peptide. Topologically, residues 20 to 483 (SPQQCYYCVE…EQPNSAPRGE (464 aa)) are extracellular. Residues 484–504 (IHQLFRCTFVAVFIVFACFIV) traverse the membrane as a helical segment. Residue Cys505 is a topological domain, cytoplasmic.

In terms of tissue distribution, component of the acid-insoluble and acid-soluble organic matrix of the aragonitic skeleton (at protein level).

It is found in the membrane. This is an uncharacterized protein from Acropora millepora (Staghorn coral).